We begin with the raw amino-acid sequence, 236 residues long: 2-C-methyl-D-erythritol 4-phosphate cytidylyltransferase (236 aa).

This sequence belongs to the IspD/TarI cytidylyltransferase family. IspD subfamily.

The catalysed reaction is 2-C-methyl-D-erythritol 4-phosphate + CTP + H(+) = 4-CDP-2-C-methyl-D-erythritol + diphosphate. It participates in isoprenoid biosynthesis; isopentenyl diphosphate biosynthesis via DXP pathway; isopentenyl diphosphate from 1-deoxy-D-xylulose 5-phosphate: step 2/6. In terms of biological role, catalyzes the formation of 4-diphosphocytidyl-2-C-methyl-D-erythritol from CTP and 2-C-methyl-D-erythritol 4-phosphate (MEP). The chain is 2-C-methyl-D-erythritol 4-phosphate cytidylyltransferase from Burkholderia cenocepacia (strain ATCC BAA-245 / DSM 16553 / LMG 16656 / NCTC 13227 / J2315 / CF5610) (Burkholderia cepacia (strain J2315)).